We begin with the raw amino-acid sequence, 86 residues long: Myosuppressin (86 aa).

The first 18 residues, 1-18 (MAIFCNNVLAALPTQCNP), serve as a signal peptide directing secretion. The propeptide occupies 19–70 (GFLDDLPPRIRKVCVALSRIYELGSEMESYIGDKENHITGFHESIPLLDSGV). Residue glutamine 73 is modified to Pyrrolidone carboxylic acid. The residue at position 82 (phenylalanine 82) is a Phenylalanine amide.

The protein resides in the secreted. In terms of biological role, myoinhibiting neuropeptide. The chain is Myosuppressin from Apis mellifera (Honeybee).